Here is a 444-residue protein sequence, read N- to C-terminus: UDP-N-acetylmuramate--L-alanine ligase (444 aa).

Residue 111–117 coordinates ATP; that stretch reads GAHGKTS.

This sequence belongs to the MurCDEF family.

The protein localises to the cytoplasm. The catalysed reaction is UDP-N-acetyl-alpha-D-muramate + L-alanine + ATP = UDP-N-acetyl-alpha-D-muramoyl-L-alanine + ADP + phosphate + H(+). Its pathway is cell wall biogenesis; peptidoglycan biosynthesis. Its function is as follows. Cell wall formation. The protein is UDP-N-acetylmuramate--L-alanine ligase of Leuconostoc mesenteroides subsp. mesenteroides (strain ATCC 8293 / DSM 20343 / BCRC 11652 / CCM 1803 / JCM 6124 / NCDO 523 / NBRC 100496 / NCIMB 8023 / NCTC 12954 / NRRL B-1118 / 37Y).